A 379-amino-acid chain; its full sequence is Probable RNA 3'-terminal phosphate cyclase-like protein (379 aa).

Belongs to the RNA 3'-terminal cyclase family. Type 2 subfamily. As to quaternary structure, part of the small subunit (SSU) processome, composed of more than 70 proteins and the RNA chaperone small nucleolar RNA (snoRNA) U3.

The protein resides in the nucleus. It is found in the nucleolus. Its function is as follows. Part of the small subunit (SSU) processome, first precursor of the small eukaryotic ribosomal subunit. During the assembly of the SSU processome in the nucleolus, many ribosome biogenesis factors, an RNA chaperone and ribosomal proteins associate with the nascent pre-rRNA and work in concert to generate RNA folding, modifications, rearrangements and cleavage as well as targeted degradation of pre-ribosomal RNA by the RNA exosome. Does not have cyclase activity. In Caenorhabditis elegans, this protein is Probable RNA 3'-terminal phosphate cyclase-like protein.